A 69-amino-acid polypeptide reads, in one-letter code: Beta-defensin 11 (69 aa).

Residues 1 to 23 (MRTLCSLLLIGCLLFSYDTPVVG) form the signal peptide. Cystine bridges form between Cys-35-Cys-64, Cys-42-Cys-57, and Cys-47-Cys-65.

This sequence belongs to the beta-defensin family.

The protein localises to the secreted. In terms of biological role, has antibacterial activity. This Rattus norvegicus (Rat) protein is Beta-defensin 11 (Defb11).